Reading from the N-terminus, the 233-residue chain is Preprocaerulein type-4 (233 aa).

A signal peptide spans Met1–Ala26. The propeptide occupies Asp27–Gly72. Residue Gln73 is modified to Pyrrolidone carboxylic acid. Tyr76 carries the post-translational modification Sulfotyrosine. Phe82 carries the post-translational modification Phenylalanine amide. The propeptide occupies Asp86–Gly87. Gln88 carries the pyrrolidone carboxylic acid modification. A Sulfotyrosine modification is found at Tyr91. Phenylalanine amide is present on Phe97. A propeptide spanning residues Asp101 to Gly151 is cleaved from the precursor. Gln152 carries the pyrrolidone carboxylic acid modification. Tyr155 is subject to Sulfotyrosine. The residue at position 161 (Phe161) is a Phenylalanine amide. Residues Asp165 to Gly215 constitute a propeptide that is removed on maturation. Residues Leu197–Asp233 are disordered. Position 216 is a pyrrolidone carboxylic acid (Gln216). Position 219 is a sulfotyrosine (Tyr219). At Phe225 the chain carries Phenylalanine amide. A propeptide spanning residues Asn229–Asp233 is cleaved from the precursor.

This sequence belongs to the gastrin/cholecystokinin family. Expressed by the skin glands.

The protein resides in the secreted. Its function is as follows. The pharmacological activities of caerulein are quite similar to the physiological activities of gastrin and related peptides. The polypeptide is Preprocaerulein type-4 (Xenopus laevis (African clawed frog)).